Here is a 312-residue protein sequence, read N- to C-terminus: Pantothenate synthetase (312 aa).

Residue 42-49 participates in ATP binding; the sequence is MGALHTGH. H49 functions as the Proton donor in the catalytic mechanism. Q73 is a (R)-pantoate binding site. Beta-alanine is bound at residue Q73. Position 159-162 (159-162) interacts with ATP; that stretch reads GEKD. Q165 is a (R)-pantoate binding site. ATP-binding positions include V188 and 196 to 199; that span reads LSSR.

It belongs to the pantothenate synthetase family. Homodimer.

Its subcellular location is the cytoplasm. The enzyme catalyses (R)-pantoate + beta-alanine + ATP = (R)-pantothenate + AMP + diphosphate + H(+). It participates in cofactor biosynthesis; (R)-pantothenate biosynthesis; (R)-pantothenate from (R)-pantoate and beta-alanine: step 1/1. Its function is as follows. Catalyzes the condensation of pantoate with beta-alanine in an ATP-dependent reaction via a pantoyl-adenylate intermediate. This chain is Pantothenate synthetase, found in Rhodococcus jostii (strain RHA1).